A 145-amino-acid polypeptide reads, in one-letter code: D-aminoacyl-tRNA deacylase (145 aa).

Positions 137–138 (GP) match the Gly-cisPro motif, important for rejection of L-amino acids motif.

It belongs to the DTD family. As to quaternary structure, homodimer.

The protein localises to the cytoplasm. It carries out the reaction glycyl-tRNA(Ala) + H2O = tRNA(Ala) + glycine + H(+). The catalysed reaction is a D-aminoacyl-tRNA + H2O = a tRNA + a D-alpha-amino acid + H(+). Its function is as follows. An aminoacyl-tRNA editing enzyme that deacylates mischarged D-aminoacyl-tRNAs. Also deacylates mischarged glycyl-tRNA(Ala), protecting cells against glycine mischarging by AlaRS. Acts via tRNA-based rather than protein-based catalysis; rejects L-amino acids rather than detecting D-amino acids in the active site. By recycling D-aminoacyl-tRNA to D-amino acids and free tRNA molecules, this enzyme counteracts the toxicity associated with the formation of D-aminoacyl-tRNA entities in vivo and helps enforce protein L-homochirality. The chain is D-aminoacyl-tRNA deacylase from Pseudomonas fluorescens (strain ATCC BAA-477 / NRRL B-23932 / Pf-5).